The chain runs to 483 residues: UDP-N-acetylmuramoyl-L-alanyl-D-glutamate--2,6-diaminopimelate ligase (483 aa).

S30 serves as a coordination point for UDP-N-acetyl-alpha-D-muramoyl-L-alanyl-D-glutamate. 109–115 is a binding site for ATP; sequence GTNGKTT. UDP-N-acetyl-alpha-D-muramoyl-L-alanyl-D-glutamate is bound by residues 151-152, S178, and R186; that span reads TT. An N6-carboxylysine modification is found at K218. Residues R380, 403-406, G453, and E457 each bind meso-2,6-diaminopimelate; that span reads DNPR. The Meso-diaminopimelate recognition motif motif lies at 403-406; that stretch reads DNPR.

Belongs to the MurCDEF family. MurE subfamily. Mg(2+) is required as a cofactor. In terms of processing, carboxylation is probably crucial for Mg(2+) binding and, consequently, for the gamma-phosphate positioning of ATP.

It is found in the cytoplasm. It carries out the reaction UDP-N-acetyl-alpha-D-muramoyl-L-alanyl-D-glutamate + meso-2,6-diaminopimelate + ATP = UDP-N-acetyl-alpha-D-muramoyl-L-alanyl-gamma-D-glutamyl-meso-2,6-diaminopimelate + ADP + phosphate + H(+). It participates in cell wall biogenesis; peptidoglycan biosynthesis. In terms of biological role, catalyzes the addition of meso-diaminopimelic acid to the nucleotide precursor UDP-N-acetylmuramoyl-L-alanyl-D-glutamate (UMAG) in the biosynthesis of bacterial cell-wall peptidoglycan. This is UDP-N-acetylmuramoyl-L-alanyl-D-glutamate--2,6-diaminopimelate ligase from Chlamydia caviae (strain ATCC VR-813 / DSM 19441 / 03DC25 / GPIC) (Chlamydophila caviae).